A 230-amino-acid polypeptide reads, in one-letter code: Putative 14-3-3-like protein GF14-H (230 aa).

This sequence belongs to the 14-3-3 family.

In terms of biological role, is associated with a DNA binding complex that binds to the G box, a well-characterized cis-acting DNA regulatory element found in plant genes. This chain is Putative 14-3-3-like protein GF14-H (GF14H), found in Oryza sativa subsp. japonica (Rice).